Consider the following 177-residue polypeptide: MLESEYHKSALARVMKEVGVDSPVKAPRFEKVCLSVGLGGASSDSKLLASAVEDLSLIAGQKAVVTVAKKSISSFKLRKGFPVGCRVTLRKRRMFDFINRLLYMALPDQKDFKGFTMRNFDGHGNMAFGLTEHIVFPEVDFDKTYRIIGMNVVVVTTASTDQLARILLSCYGFPFRD.

This sequence belongs to the universal ribosomal protein uL5 family. Part of the 50S ribosomal subunit; part of the 5S rRNA/L5/L18/L25 subcomplex. Contacts the 5S rRNA and the P site tRNA. Forms a bridge to the 30S subunit in the 70S ribosome.

Functionally, this is one of the proteins that bind and probably mediate the attachment of the 5S RNA into the large ribosomal subunit, where it forms part of the central protuberance. In the 70S ribosome it contacts protein S13 of the 30S subunit (bridge B1b), connecting the 2 subunits; this bridge is implicated in subunit movement. Contacts the P site tRNA; the 5S rRNA and some of its associated proteins might help stabilize positioning of ribosome-bound tRNAs. This Neorickettsia sennetsu (strain ATCC VR-367 / Miyayama) (Ehrlichia sennetsu) protein is Large ribosomal subunit protein uL5.